Consider the following 268-residue polypeptide: MHYTNMEIFPVFGISKISNFIANNDCRYYIDVEHQKIISDEINRQMDETVLLTNILSVEVVNDNEMYHLIPHRLSTIILCISSVGGCVISIDNDVNDKNILTFPIDHAVIISPLSKCVVVSKGPTTILVVKADIPSKRLVTSFTNDILYVNNLSLINYLPSSVFIIRRVTDYLDRHICDQIFANNKWYSIITIDDKQYPIPSNCIGMSSAKYINSSIEQDILIHVCNLEHPFDSVYKKMQSYNSLPIKEQILYGRIDNINMSISISVD.

It belongs to the orthopoxvirus OPG165 family.

This is Protein OPG165 (OPG165) from Cynomys gunnisoni (Gunnison's prairie dog).